A 916-amino-acid chain; its full sequence is Dual serine/threonine and tyrosine protein kinase (916 aa).

Positions 1–19 (MQRDGTRSARRMDEGDRRT) are enriched in basic and acidic residues. Residues 1–27 (MQRDGTRSARRMDEGDRRTGSAGRSGS) form a disordered region. The Protein kinase domain occupies 641 to 895 (PRIGRELGRG…PLMGIVQPML (255 aa)). Residues 647 to 655 (LGRGQYGVV) and K670 contribute to the ATP site. The active-site Proton acceptor is the D766.

This sequence belongs to the protein kinase superfamily. Ser/Thr protein kinase family.

The protein resides in the cytoplasm. Its subcellular location is the cell membrane. It localises to the apical cell membrane. It is found in the basolateral cell membrane. The protein localises to the cell junction. It carries out the reaction L-seryl-[protein] + ATP = O-phospho-L-seryl-[protein] + ADP + H(+). The catalysed reaction is L-threonyl-[protein] + ATP = O-phospho-L-threonyl-[protein] + ADP + H(+). It catalyses the reaction L-tyrosyl-[protein] + ATP = O-phospho-L-tyrosyl-[protein] + ADP + H(+). Functionally, may act as a positive regulator of ERK phosphorylation downstream of fibroblast growth factor-receptor activation. May induce both caspase-dependent apoptosis and caspase-independent cell death. May play a role in the embryonic development. The chain is Dual serine/threonine and tyrosine protein kinase (dstyk) from Xenopus laevis (African clawed frog).